We begin with the raw amino-acid sequence, 143 residues long: Nucleoside diphosphate kinase (143 aa).

ATP is bound by residues K11, F59, R87, T93, R104, and N114. The active-site Pros-phosphohistidine intermediate is the H117.

This sequence belongs to the NDK family. In terms of assembly, homotetramer. It depends on Mg(2+) as a cofactor.

Its subcellular location is the cytoplasm. It catalyses the reaction a 2'-deoxyribonucleoside 5'-diphosphate + ATP = a 2'-deoxyribonucleoside 5'-triphosphate + ADP. The enzyme catalyses a ribonucleoside 5'-diphosphate + ATP = a ribonucleoside 5'-triphosphate + ADP. Major role in the synthesis of nucleoside triphosphates other than ATP. The ATP gamma phosphate is transferred to the NDP beta phosphate via a ping-pong mechanism, using a phosphorylated active-site intermediate. In Stutzerimonas stutzeri (strain A1501) (Pseudomonas stutzeri), this protein is Nucleoside diphosphate kinase.